Reading from the N-terminus, the 376-residue chain is Putative phosphoserine aminotransferase (376 aa).

Residue Arg-50 participates in L-glutamate binding. Residues Ala-84–Thr-85, Phe-108, Thr-154, Asp-176, and Gln-199 contribute to the pyridoxal 5'-phosphate site. Lys-200 is subject to N6-(pyridoxal phosphate)lysine. Position 251 to 252 (Asn-251 to Thr-252) interacts with pyridoxal 5'-phosphate.

It belongs to the class-V pyridoxal-phosphate-dependent aminotransferase family. SerC subfamily. As to quaternary structure, homodimer. Pyridoxal 5'-phosphate serves as cofactor.

The protein localises to the cytoplasm. The enzyme catalyses O-phospho-L-serine + 2-oxoglutarate = 3-phosphooxypyruvate + L-glutamate. It catalyses the reaction 4-(phosphooxy)-L-threonine + 2-oxoglutarate = (R)-3-hydroxy-2-oxo-4-phosphooxybutanoate + L-glutamate. Its pathway is amino-acid biosynthesis; L-serine biosynthesis; L-serine from 3-phospho-D-glycerate: step 2/3. It participates in cofactor biosynthesis; pyridoxine 5'-phosphate biosynthesis; pyridoxine 5'-phosphate from D-erythrose 4-phosphate: step 3/5. Functionally, catalyzes the reversible conversion of 3-phosphohydroxypyruvate to phosphoserine and of 3-hydroxy-2-oxo-4-phosphonooxybutanoate to phosphohydroxythreonine. The polypeptide is Putative phosphoserine aminotransferase (Mycobacterium bovis (strain ATCC BAA-935 / AF2122/97)).